We begin with the raw amino-acid sequence, 124 residues long: Large ribosomal subunit protein bL21 (124 aa).

This sequence belongs to the bacterial ribosomal protein bL21 family. Part of the 50S ribosomal subunit. Contacts protein L20.

Functionally, this protein binds to 23S rRNA in the presence of protein L20. The sequence is that of Large ribosomal subunit protein bL21 from Sinorhizobium medicae (strain WSM419) (Ensifer medicae).